The sequence spans 1763 residues: MSQTLSFVLKTHSVRKDFVHSVKRTLARRRDLQYLNNKLSRSMRAEACPSCASYDVCPNCTSGDIPDDGSSTMTIPSWEEITKTSTYSLLLSEDTSDELCPDDLVNVAAHIRKALSTQSHPANVEMCKEQLTSLLVMAEAMLPQRSRSMIPLHQQHQTARLEWREKFFSKPIDFLLERIGVSKDILQITAIWKIILEKACYCKSYGEEWFNIAKQKLREIKCFEGNTLKPLVGAFIDGLRLMTVDNPNPMAFLPKLIGLIKPLNLAMIIDNHENTTSGWIITLTAIMELYGITECTIDIITSLITTFYDKLAKATKFYSQVKALFMGFRSEDVANSFWYMAAAILCYLITGLIPNNGKFSKIKACLSGATTLVSGIIATQKLAAMFATWNSESIVNELSARTVAISELNNPTTTSDTDSVERLLELAKILHEEIKVHTLNPIMQSYNPILRNLMSTLDGVITSCNKRKAIARKRQVPVCYILTGPPGCGKTTAAQALAKKLSDQEPSVINLDVDHHDTYTGNEVCIIDEFDSSDKVDYANFVIGMVNSAPMVLNCDMLENKGKLFTSKYIIMTSNSETPVKPSSKRAGAFYRRVTIIDVTNPLVESHKRARPGTSVPRSCYKKNFSHLSLAKRGAECWCKEYVLDPKGLQHQTIKAPPPTFLNIDSLAQTMKQDFTLKNMAFEAEEGCSDHRYGFVCQQSEVETVRRLLNAIRVRLNATFTVCVGPEASNSVGCTAHVLTPDEPFNGKKFVVSRCNEASLSALEGNCVQSALGVCMSNKDLVHLCHFIRGKIVNDSVRLDELPANQHVVTVNSVFDLAWALRRHLSLTGQFQAIRAAYDVLTVPDKIPAMLRHWMDQTSFSDEHVVTQFVTPGGIVILESCGGARIWALGHNVIRAGGVTATPTGGCVRLMGLSAQTMPWCEIFRELFSLLAKIWSSVKVSTLVLTALGMYASRFRPKSEAKGKTKSKIGPYRGRGVALTDDEYDEWKEHNASRKLDLSVEDFLMLRHRAALGADDADAVKFRSWWNSRSKLADDYEDVTVIGKGGVKHERIRTSTLKAVDRGYDVSFAEESGPGTKFHKNAIGSVTDVCGEHKGYCVHMGHGVYASVAHVVKGDSFFLGERIFDLKTNGEFCCFRSTKILPSAAPFFSGKPTRDPWGSPVATEWKAKAYTTTSGKIVGCFATTSTETHPGDCGLPYIDDNGRVTGLHTGSGGPKTPSAKLVVPYVHIDMRTKAVTAQKYDVTKPDISYKGLICKQLDEIRIIPKGTRLHVSPAHTEDYEECSHQPASLGSGDPRCPKSLTAIVVDSLKPYCEKVEGPPHDILHRVQKMLIDHLSGFVPMNISSETSMLSAFHKLNHDTSCGPYLGGRKKDHMTNGEPDKTLLDLLSSKWKLATQGISLPHEYTIGLKDELRPVEKVAEGKRRMIWGCDVGVATVCAAAFKAVSDAITANHQYGPVQVGINMDSPSVEALYQRIKSAAKVYAVDYSKWDSTQSPRVSAASIDILRYFSDRSPIVDSAANTLKSPPVAIFNGVAVKVTSGLPSGMPLTSVINSLNHCLYVGCAIMQSLEARNIPVTWNLFSSFDVMTYGDDGVYMFPTMFASISDQIFGNLSAYGLKPTRVDKSIGAIEPIDPDSVVFLKRTITRTPQGIRGLLDRSSIIRQFYYIKGENSDDWKTPPKTIDPTSRGQQLWNACLYASQHGSEFYNKVYRLAVRAVEYEELHFEPPTYSSALEHYNSQFNGVEARSDQINMSDGTALHCDVFEV.

Residues 458 to 614 enclose the SF3 helicase domain; that stretch reads DGVITSCNKR…ESHKRARPGT (157 aa). Residue 484 to 491 coordinates ATP; the sequence is GPPGCGKT. Tyr-984 bears the O-(5'-phospho-RNA)-tyrosine mark. In terms of domain architecture, Peptidase C24 spans 1073–1229; the sequence is GPGTKFHKNA…KLVVPYVHID (157 aa). Catalysis depends on for 3CLpro activity residues His-1110, Glu-1131, and Cys-1193. The region spanning 1478–1603 is the RdRp catalytic domain; sequence AKVYAVDYSK…MFPTMFASIS (126 aa).

Protein p32: Homodimer. Interacts with NTPase, protein p30 and protease-polymerase p76. In terms of assembly, interacts with capsid protein VP1 and protease-polymerase p76. As to quaternary structure, homooligomer. Interacts with Vpg, protein p32 and may interact with capsid protein VP1. Post-translationally, specific enzymatic cleavages in vivo yield mature proteins. Pro-Pol is first autocatalytically cleaved, then processes the whole polyprotein. In terms of processing, VPg is uridylylated by the polymerase and is covalently attached to the 5'-end of the polyadenylated genomic and subgenomic RNAs. This uridylylated form acts as a nucleotide-peptide primer for the polymerase.

It catalyses the reaction a ribonucleoside 5'-triphosphate + H2O = a ribonucleoside 5'-diphosphate + phosphate + H(+). It carries out the reaction RNA(n) + a ribonucleoside 5'-triphosphate = RNA(n+1) + diphosphate. The enzyme catalyses Endopeptidase with a preference for cleavage when the P1 position is occupied by Glu-|-Xaa and the P1' position is occupied by Gly-|-Yaa.. In terms of biological role, NTPase presumably plays a role in replication. Despite having similarities with helicases, does not seem to display any helicase activity. Its function is as follows. Viral genome-linked protein is covalently linked to the 5'-end of the positive-strand, negative-strand genomic RNAs and subgenomic RNA. Acts as a genome-linked replication primer. May recruit ribosome to viral RNA thereby promoting viral proteins translation. The protease activity processes the polyprotein: Pro-Pol is first released by autocleavage, then all other proteins are cleaved. Cleaves host translation initiation factor eIF4G1, eIF4G2 and PABP1 thereby inducing a shutdown of host protein synthesis. This shutdown may not prevent viral mRNA from being translated since viral Vpg replaces the cap. May cleave host polyadenylate-binding protein thereby inhibiting cellular translation. Seems to act as a RNase and degrades host Pol II-driven mRNAs with the help of host XRN1. Inhibits the integrated stress response (ISR) in the infected cell by cleaving host G3BP1 and G3BP2. Stress granule formation is thus inhibited, which allows protein synthesis and viral replication. The RNA-directed RNA polymerase activity replicates genomic and antigenomic viral RNA by recognizing specific signals. Also transcribes a subgenomic mRNA by initiating RNA synthesis internally on antigenomic RNA. This sgRNA codes for structural proteins. Catalyzes the covalent attachment VPg with viral RNAs. Functionally, selectively decays the mRNA of host interferon receptor IFNAR1. The sequence is that of Genome polyprotein from Feline calicivirus (FCV).